Consider the following 505-residue polypeptide: Putative pentatricopeptide repeat-containing protein At1g26500 (505 aa).

PPR repeat units lie at residues 145–179 (NDKT…GYLY), 180–210 (NVET…LKEF), 214–248 (DEIT…GFDV), 249–279 (DIEA…MVSK), 285–319 (DGGF…GVYV), 320–350 (DNLT…VENP), and 351–385 (DISI…GCEP).

The protein belongs to the PPR family. P subfamily.

This is Putative pentatricopeptide repeat-containing protein At1g26500 from Arabidopsis thaliana (Mouse-ear cress).